The sequence spans 266 residues: 2-dehydro-3-deoxy-D-gluconate/2-dehydro-3-deoxy-phosphogluconate aldolase (266 aa).

Substrate is bound by residues 36-37 (ST), 123-125 (YNI), and 151-153 (KDS). K151 serves as the catalytic Schiff-base intermediate with substrate.

The protein belongs to the DapA family. KDPG aldolase subfamily. In terms of assembly, homotetramer; dimer of dimers.

The catalysed reaction is 2-dehydro-3-deoxy-6-phospho-D-gluconate = D-glyceraldehyde 3-phosphate + pyruvate. It carries out the reaction 2-dehydro-3-deoxy-D-gluconate = D-glyceraldehyde + pyruvate. It catalyses the reaction 2-dehydro-3-deoxy-6-phospho-D-galactonate = D-glyceraldehyde 3-phosphate + pyruvate. The enzyme catalyses 2-dehydro-3-deoxy-D-galactonate = D-glyceraldehyde + pyruvate. The protein operates within carbohydrate acid metabolism; 2-dehydro-3-deoxy-D-gluconate degradation; D-glyceraldehyde 3-phosphate and pyruvate from 2-dehydro-3-deoxy-D-gluconate: step 2/2. Functionally, involved in the degradation of glucose via the Entner-Doudoroff pathway. Catalyzes the reversible cleavage of 2-keto-3-deoxy-6-phosphogluconate (KDPG) and 2-keto-3-deoxygluconate (KDG) forming pyruvate and glyceraldehyde 3-phosphate or glyceraldehyde, respectively. It is also able to catalyze the reversible cleavage of 2-keto-3-deoxy-6-phosphogalactonate (KDPGal) and 2-keto-3-deoxygalactonate (KDGal). It is equally active with both D- and L-glyceraldehyde. This is 2-dehydro-3-deoxy-D-gluconate/2-dehydro-3-deoxy-phosphogluconate aldolase from Picrophilus torridus (strain ATCC 700027 / DSM 9790 / JCM 10055 / NBRC 100828 / KAW 2/3).